The primary structure comprises 370 residues: 3-dehydroquinate synthase (370 aa).

NAD(+) is bound by residues 107–111 (GVIGD), 131–132 (TS), K144, and K153. Zn(2+) contacts are provided by E186, H249, and H267.

It belongs to the sugar phosphate cyclases superfamily. Dehydroquinate synthase family. The cofactor is Co(2+). Requires Zn(2+) as cofactor. NAD(+) serves as cofactor.

Its subcellular location is the cytoplasm. It carries out the reaction 7-phospho-2-dehydro-3-deoxy-D-arabino-heptonate = 3-dehydroquinate + phosphate. It participates in metabolic intermediate biosynthesis; chorismate biosynthesis; chorismate from D-erythrose 4-phosphate and phosphoenolpyruvate: step 2/7. Its function is as follows. Catalyzes the conversion of 3-deoxy-D-arabino-heptulosonate 7-phosphate (DAHP) to dehydroquinate (DHQ). This Jannaschia sp. (strain CCS1) protein is 3-dehydroquinate synthase.